Here is a 199-residue protein sequence, read N- to C-terminus: uncharacterized protein (199 aa).

4 helical membrane-spanning segments follow: residues 41-61 (LFIP…AFIC), 72-92 (SLIC…CSPW), 109-129 (TVWV…SIFV), and 145-165 (VTYS…LLNL).

It to M.pneumoniae MPN_037.

It localises to the cell membrane. This is an uncharacterized protein from Mycoplasma pneumoniae (strain ATCC 29342 / M129 / Subtype 1) (Mycoplasmoides pneumoniae).